A 431-amino-acid polypeptide reads, in one-letter code: 5'-deoxyadenosine deaminase (431 aa).

His65 and His67 together coordinate Zn(2+). Substrate-binding residues include Glu94 and His185. His212 is a binding site for Zn(2+). The substrate site is built by Glu215 and Asp300. Asp300 is a Zn(2+) binding site.

This sequence belongs to the metallo-dependent hydrolases superfamily. MTA/SAH deaminase family. In terms of assembly, homotetramer. It depends on Zn(2+) as a cofactor.

It catalyses the reaction 5'-deoxyadenosine + H2O + H(+) = 5'-deoxyinosine + NH4(+). It carries out the reaction S-adenosyl-L-homocysteine + H2O + H(+) = S-inosyl-L-homocysteine + NH4(+). The catalysed reaction is S-methyl-5'-thioadenosine + H2O + H(+) = S-methyl-5'-thioinosine + NH4(+). The enzyme catalyses adenosine + H2O + H(+) = inosine + NH4(+). Its pathway is amino-acid biosynthesis; S-adenosyl-L-methionine biosynthesis. Functionally, catalyzes the deamination of three SAM-derived enzymatic products, namely 5'-deoxyadenosine, S-adenosyl-L-homocysteine, and 5'-methylthioadenosine, to produce the inosine analogs. Can also deaminate adenosine. The preferred substrate for this enzyme is 5'-deoxyadenosine, but all these substrates are efficiently deaminated. Likely functions in a S-adenosyl-L-methionine (SAM) recycling pathway from S-adenosyl-L-homocysteine (SAH) produced from SAM-dependent methylation reactions. May also be involved in the recycling of 5'-deoxyadenosine, whereupon the 5'-deoxyribose moiety of 5'-deoxyinosine is further metabolized to deoxyhexoses used for the biosynthesis of aromatic amino acids in methanogens. The chain is 5'-deoxyadenosine deaminase from Methanopyrus kandleri (strain AV19 / DSM 6324 / JCM 9639 / NBRC 100938).